Here is a 432-residue protein sequence, read N- to C-terminus: Trigger factor (432 aa).

The PPIase FKBP-type domain maps to 161–246; the sequence is EDRVTIDFTG…LKKVEERELP (86 aa).

It belongs to the FKBP-type PPIase family. Tig subfamily. Homodimer and monomer. In vivo most of the ribosomes are in complex with monomeric TF. Uncomplexed TF, however, is in a monomer-dimer equilibrium with approximately two thirds of TF existing in a dimeric state.

Its subcellular location is the cytoplasm. The enzyme catalyses [protein]-peptidylproline (omega=180) = [protein]-peptidylproline (omega=0). Its function is as follows. Involved in protein export. Acts as a chaperone by maintaining the newly synthesized protein in an open conformation. Functions as a peptidyl-prolyl cis-trans isomerase. This Escherichia coli O127:H6 (strain E2348/69 / EPEC) protein is Trigger factor.